The chain runs to 212 residues: 2-C-methyl-D-erythritol 4-phosphate cytidylyltransferase (212 aa).

It belongs to the IspD/TarI cytidylyltransferase family. IspD subfamily.

The enzyme catalyses 2-C-methyl-D-erythritol 4-phosphate + CTP + H(+) = 4-CDP-2-C-methyl-D-erythritol + diphosphate. The protein operates within isoprenoid biosynthesis; isopentenyl diphosphate biosynthesis via DXP pathway; isopentenyl diphosphate from 1-deoxy-D-xylulose 5-phosphate: step 2/6. In terms of biological role, catalyzes the formation of 4-diphosphocytidyl-2-C-methyl-D-erythritol from CTP and 2-C-methyl-D-erythritol 4-phosphate (MEP). This is 2-C-methyl-D-erythritol 4-phosphate cytidylyltransferase from Chlamydia caviae (strain ATCC VR-813 / DSM 19441 / 03DC25 / GPIC) (Chlamydophila caviae).